Reading from the N-terminus, the 591-residue chain is L-fucose isomerase (591 aa).

Residues Glu337 and Asp361 each act as proton acceptor in the active site. Mn(2+) contacts are provided by Glu337, Asp361, and His528.

This sequence belongs to the L-fucose isomerase family. In terms of assembly, homohexamer. The cofactor is Mn(2+).

The protein resides in the cytoplasm. It carries out the reaction L-fucose = L-fuculose. Its pathway is carbohydrate degradation; L-fucose degradation; L-lactaldehyde and glycerone phosphate from L-fucose: step 1/3. Converts the aldose L-fucose into the corresponding ketose L-fuculose. The sequence is that of L-fucose isomerase from Salmonella heidelberg (strain SL476).